Here is a 181-residue protein sequence, read N- to C-terminus: Translation initiation factor IF-3, chloroplastic (181 aa).

The protein belongs to the IF-3 family. Monomer.

It is found in the plastid. The protein localises to the chloroplast. Functionally, IF-3 binds to the 30S ribosomal subunit and shifts the equilibrium between 70S ribosomes and their 50S and 30S subunits in favor of the free subunits, thus enhancing the availability of 30S subunits on which protein synthesis initiation begins. This is Translation initiation factor IF-3, chloroplastic from Galdieria sulphuraria (Red alga).